A 293-amino-acid chain; its full sequence is 4-hydroxy-tetrahydrodipicolinate synthase (293 aa).

Residue Thr47 participates in pyruvate binding. The Proton donor/acceptor role is filled by Tyr135. Lys163 acts as the Schiff-base intermediate with substrate in catalysis. Position 205 (Val205) interacts with pyruvate.

The protein belongs to the DapA family. Homotetramer; dimer of dimers.

It localises to the cytoplasm. The enzyme catalyses L-aspartate 4-semialdehyde + pyruvate = (2S,4S)-4-hydroxy-2,3,4,5-tetrahydrodipicolinate + H2O + H(+). Its pathway is amino-acid biosynthesis; L-lysine biosynthesis via DAP pathway; (S)-tetrahydrodipicolinate from L-aspartate: step 3/4. In terms of biological role, catalyzes the condensation of (S)-aspartate-beta-semialdehyde [(S)-ASA] and pyruvate to 4-hydroxy-tetrahydrodipicolinate (HTPA). This is 4-hydroxy-tetrahydrodipicolinate synthase from Leptothrix cholodnii (strain ATCC 51168 / LMG 8142 / SP-6) (Leptothrix discophora (strain SP-6)).